Reading from the N-terminus, the 142-residue chain is Small ribosomal subunit protein uS12y (142 aa).

Hydroxyproline is present on P61.

The protein belongs to the universal ribosomal protein uS12 family.

This chain is Small ribosomal subunit protein uS12y (RPS23B), found in Arabidopsis thaliana (Mouse-ear cress).